Here is a 286-residue protein sequence, read N- to C-terminus: Cysteine-rich repeat secretory protein 57 (286 aa).

The N-terminal stretch at 1 to 20 is a signal peptide; it reads METTKKLSVLLCLFFTMNQA. Residues 21–265 are Extracellular-facing; that stretch reads ISESDSDEHM…PSRSGSFSIR (245 aa). 2 consecutive Gnk2-homologous domains span residues 29–131 and 137–247; these read HMAT…DKFF and TKPN…TSNS. 10 N-linked (GlcNAc...) asparagine glycosylation sites follow: Asn-35, Asn-40, Asn-44, Asn-60, Asn-69, Asn-90, Asn-100, Asn-108, Asn-209, and Asn-246. The chain crosses the membrane as a helical span at residues 266–284; sequence GNNKILVGMILAVSVFAFL. Residues 285–286 are Cytoplasmic-facing; sequence GL.

The protein belongs to the cysteine-rich repeat secretory protein family.

It is found in the membrane. In Arabidopsis thaliana (Mouse-ear cress), this protein is Cysteine-rich repeat secretory protein 57 (CRRSP57).